The primary structure comprises 237 residues: uncharacterized protein (237 aa).

This is an uncharacterized protein from Schizosaccharomyces pombe (strain 972 / ATCC 24843) (Fission yeast).